We begin with the raw amino-acid sequence, 338 residues long: 5-dehydro-2-deoxygluconokinase (338 aa).

It belongs to the carbohydrate kinase PfkB family.

It carries out the reaction 5-dehydro-2-deoxy-D-gluconate + ATP = 6-phospho-5-dehydro-2-deoxy-D-gluconate + ADP + H(+). The protein operates within polyol metabolism; myo-inositol degradation into acetyl-CoA; acetyl-CoA from myo-inositol: step 5/7. Catalyzes the phosphorylation of 5-dehydro-2-deoxy-D-gluconate (2-deoxy-5-keto-D-gluconate or DKG) to 6-phospho-5-dehydro-2-deoxy-D-gluconate (DKGP). The protein is 5-dehydro-2-deoxygluconokinase of Clostridium perfringens (strain ATCC 13124 / DSM 756 / JCM 1290 / NCIMB 6125 / NCTC 8237 / Type A).